A 77-amino-acid polypeptide reads, in one-letter code: Translation initiation factor IF-1, chloroplastic (77 aa).

Residues 1-71 (MKEQKWIHEG…TRGRIIYRLR (71 aa)) form the S1-like domain.

This sequence belongs to the IF-1 family. As to quaternary structure, component of the 30S ribosomal translation pre-initiation complex which assembles on the 30S ribosome in the order IF-2 and IF-3, IF-1 and N-formylmethionyl-tRNA(fMet); mRNA recruitment can occur at any time during PIC assembly.

It is found in the plastid. Its subcellular location is the chloroplast. In terms of biological role, one of the essential components for the initiation of protein synthesis. Stabilizes the binding of IF-2 and IF-3 on the 30S subunit to which N-formylmethionyl-tRNA(fMet) subsequently binds. Helps modulate mRNA selection, yielding the 30S pre-initiation complex (PIC). Upon addition of the 50S ribosomal subunit IF-1, IF-2 and IF-3 are released leaving the mature 70S translation initiation complex. The chain is Translation initiation factor IF-1, chloroplastic from Nandina domestica (Heavenly bamboo).